A 658-amino-acid polypeptide reads, in one-letter code: Glycogen debranching enzyme (658 aa).

The Nucleophile role is filled by Asp-336. The active-site Proton donor is Glu-371. Positions 459-484 (EANGEENRDGTNSNYSDNHGKEGLGG) are disordered.

This sequence belongs to the glycosyl hydrolase 13 family.

It carries out the reaction Hydrolysis of (1-&gt;6)-alpha-D-glucosidic linkages to branches with degrees of polymerization of three or four glucose residues in limit dextrin.. It participates in glycan degradation; glycogen degradation. Functionally, removes maltotriose and maltotetraose chains that are attached by 1,6-alpha-linkage to the limit dextrin main chain, generating a debranched limit dextrin. This is Glycogen debranching enzyme from Salmonella paratyphi B (strain ATCC BAA-1250 / SPB7).